A 401-amino-acid chain; its full sequence is Methionine import ATP-binding protein MetN (401 aa).

The ABC transporter domain maps to 6 to 248 (ITFDHVVKEF…PQQPVTKRFI (243 aa)). Position 45–52 (45–52 (GYSGAGKS)) interacts with ATP.

This sequence belongs to the ABC transporter superfamily. Methionine importer (TC 3.A.1.24) family. In terms of assembly, the complex is composed of two ATP-binding proteins (MetN), two transmembrane proteins (MetI) and a solute-binding protein (MetQ).

Its subcellular location is the cell membrane. It carries out the reaction L-methionine(out) + ATP + H2O = L-methionine(in) + ADP + phosphate + H(+). The catalysed reaction is D-methionine(out) + ATP + H2O = D-methionine(in) + ADP + phosphate + H(+). Functionally, part of the ABC transporter complex MetNIQ involved in methionine import. Responsible for energy coupling to the transport system. This chain is Methionine import ATP-binding protein MetN, found in Bifidobacterium longum (strain NCC 2705).